The sequence spans 377 residues: Glutamate 5-kinase (377 aa).

Lys-15 lines the ATP pocket. Ser-56, Asp-143, and Asn-155 together coordinate substrate. 175-176 (SD) contacts ATP. The region spanning 281–358 (KGTLTIDAGA…PDVLIILGIS (78 aa)) is the PUA domain.

The protein belongs to the glutamate 5-kinase family.

The protein localises to the cytoplasm. It catalyses the reaction L-glutamate + ATP = L-glutamyl 5-phosphate + ADP. It functions in the pathway amino-acid biosynthesis; L-proline biosynthesis; L-glutamate 5-semialdehyde from L-glutamate: step 1/2. Functionally, catalyzes the transfer of a phosphate group to glutamate to form L-glutamate 5-phosphate. This Rhodopseudomonas palustris (strain BisA53) protein is Glutamate 5-kinase.